Here is a 902-residue protein sequence, read N- to C-terminus: FSPIDRYNDNHTQETYEDREWENVYRSTHGVNCTGSCSWKDGIVTWEGQELNYPTTGPDMPDFEPRGASYSWYLYSANRGVLWSMWQEELQNNESPLDAWKSSWQEVNELIAASNVYTVKTYGPDRVAGFSPIPAMSMVSYASGARTPDAHFFTEVRVVSVSPDFAESTKLCDLWLAPKQGTDAAMALAMGHVMLREFHLDNPSDYFLNYCRQYTDFPFLVTLSKQKGDQFVADRAADLVDALGQENNPEWKPVLWNENTNDFATPHGTMGSRGKWNLEQRLEDEETGEKLSVLGIEDEIGTVRLQLADGSTALVTTVYDLTMANYGLERGLGGQEPKDFNDDVPFTPAWQEKITGVPRELIIQIAREFADNADKTHGRAVLNLVLLVGAQGVNGGGWAHYVGQEKLRPAEGWQTIAMAKHMNSTSYFYNHSSQWRYETVTAQELLSPMADKYQHHGDYNVLAARMGWLPSAPQLGTNPLRQAGMSPVDYTVKFAAEQPENGKNHPRNLFVWRSNLLGSSGKGHEYMLKYLLGTENGIQGKQGGVKPEEVEWKLSSTCLYSDIVLPTATWYEKDDMNTSDMHPFIHPLSAAVDPAWESKSDWDIFTSLSKKFSEVCVGHLGKETDVVTLPIQHDSAAELAQPLDVKDWKGECEPIPGKTMPQIHVVERDYPATYERFTSIGPLMEKGIAWNTQSEMDLLRAWAALSEFTGRDHTHLALNKEDEKFRDIQAQPRTVITSPAFTGSEKQSFYLDHDMMKDFGESLLVYRPPIDTRKSRPEVEGKEITLNYLTPHNKGGPIVWISETDARDLGIEDNDWIEVFNSNGALTARVPAGMTMMYHAQERGGIHNSVTRPTHMIGGYAQLAYGFNYYGTVGSNRDEFVVVRNINWLDGEGNDQVQESVK.

The [4Fe-4S] cluster site is built by His-29, Cys-33, and Cys-37.

It belongs to the prokaryotic molybdopterin-containing oxidoreductase family. As to quaternary structure, heterotrimer composed of an alpha, a beta and a gamma chain. Alpha and beta are catalytic chains; gamma chains are involved in binding the enzyme complex to the cytoplasmic membrane. The cofactor is [4Fe-4S] cluster. Mo-bis(molybdopterin guanine dinucleotide) serves as cofactor.

The protein localises to the cell membrane. The protein resides in the cytoplasm. It carries out the reaction nitrate + a quinol = a quinone + nitrite + H2O. Inhibited by micromolar concentrations of azide. The nitrate reductase enzyme complex allows Bradyrhizobium sp. USDA 3045 to use nitrate as an electron acceptor during anaerobic growth. The alpha chain is the actual site of nitrate reduction. This Bradyrhizobium sp protein is Respiratory nitrate reductase alpha chain (narG).